Reading from the N-terminus, the 231-residue chain is Orotidine 5'-phosphate decarboxylase (231 aa).

Substrate-binding positions include Asp-11, Lys-33, 60–69 (DLKLHDIPNT), Thr-119, Arg-181, Gln-190, Gly-210, and Arg-211. Lys-62 functions as the Proton donor in the catalytic mechanism.

The protein belongs to the OMP decarboxylase family. Type 1 subfamily. In terms of assembly, homodimer.

The enzyme catalyses orotidine 5'-phosphate + H(+) = UMP + CO2. It participates in pyrimidine metabolism; UMP biosynthesis via de novo pathway; UMP from orotate: step 2/2. Functionally, catalyzes the decarboxylation of orotidine 5'-monophosphate (OMP) to uridine 5'-monophosphate (UMP). The chain is Orotidine 5'-phosphate decarboxylase from Malacoplasma penetrans (strain HF-2) (Mycoplasma penetrans).